Consider the following 259-residue polypeptide: DNA repair protein RecO (259 aa).

It belongs to the RecO family.

In terms of biological role, involved in DNA repair and RecF pathway recombination. The sequence is that of DNA repair protein RecO from Syntrophus aciditrophicus (strain SB).